Reading from the N-terminus, the 417-residue chain is Tol-Pal system protein TolB (417 aa).

Residues 1 to 16 (MRYLWLFLIHTIGLFA) form the signal peptide.

Belongs to the TolB family. The Tol-Pal system is composed of five core proteins: the inner membrane proteins TolA, TolQ and TolR, the periplasmic protein TolB and the outer membrane protein Pal. They form a network linking the inner and outer membranes and the peptidoglycan layer.

Its subcellular location is the periplasm. Functionally, part of the Tol-Pal system, which plays a role in outer membrane invagination during cell division and is important for maintaining outer membrane integrity. In Helicobacter pylori (strain ATCC 700392 / 26695) (Campylobacter pylori), this protein is Tol-Pal system protein TolB.